The sequence spans 599 residues: Elongation factor 4 (599 aa).

Positions 2-184 (KNIRNFSIIA…RLVRDIPPPE (183 aa)) constitute a tr-type G domain. GTP is bound by residues 14–19 (DHGKST) and 131–134 (NKID).

The protein belongs to the TRAFAC class translation factor GTPase superfamily. Classic translation factor GTPase family. LepA subfamily.

The protein resides in the cell inner membrane. It catalyses the reaction GTP + H2O = GDP + phosphate + H(+). In terms of biological role, required for accurate and efficient protein synthesis under certain stress conditions. May act as a fidelity factor of the translation reaction, by catalyzing a one-codon backward translocation of tRNAs on improperly translocated ribosomes. Back-translocation proceeds from a post-translocation (POST) complex to a pre-translocation (PRE) complex, thus giving elongation factor G a second chance to translocate the tRNAs correctly. Binds to ribosomes in a GTP-dependent manner. The protein is Elongation factor 4 of Escherichia coli O8 (strain IAI1).